The chain runs to 254 residues: 3-deoxy-manno-octulosonate cytidylyltransferase (254 aa).

Belongs to the KdsB family.

The protein resides in the cytoplasm. It catalyses the reaction 3-deoxy-alpha-D-manno-oct-2-ulosonate + CTP = CMP-3-deoxy-beta-D-manno-octulosonate + diphosphate. Its pathway is nucleotide-sugar biosynthesis; CMP-3-deoxy-D-manno-octulosonate biosynthesis; CMP-3-deoxy-D-manno-octulosonate from 3-deoxy-D-manno-octulosonate and CTP: step 1/1. It functions in the pathway bacterial outer membrane biogenesis; lipopolysaccharide biosynthesis. Activates KDO (a required 8-carbon sugar) for incorporation into bacterial lipopolysaccharide in Gram-negative bacteria. This chain is 3-deoxy-manno-octulosonate cytidylyltransferase, found in Porphyromonas gingivalis (strain ATCC BAA-308 / W83).